We begin with the raw amino-acid sequence, 370 residues long: tRNA-specific 2-thiouridylase MnmA (370 aa).

Residues 24–31 (AMSGGVDS) and L50 each bind ATP. C118 (nucleophile) is an active-site residue. A disulfide bond links C118 and C214. G142 is an ATP binding site. The segment at 164 to 166 (KDQ) is interaction with tRNA. Residue C214 is the Cysteine persulfide intermediate of the active site.

Belongs to the MnmA/TRMU family.

It is found in the cytoplasm. The catalysed reaction is S-sulfanyl-L-cysteinyl-[protein] + uridine(34) in tRNA + AH2 + ATP = 2-thiouridine(34) in tRNA + L-cysteinyl-[protein] + A + AMP + diphosphate + H(+). Catalyzes the 2-thiolation of uridine at the wobble position (U34) of tRNA, leading to the formation of s(2)U34. The protein is tRNA-specific 2-thiouridylase MnmA of Ehrlichia ruminantium (strain Gardel).